The primary structure comprises 234 residues: MSETWEALRKKARSTENSIDVKLVSLNKLTASSHGGFDIDEKTVSSRQTSFKTVTTEIEGLIEQLTNINDDMNDVAGAQSSASWANNPAIQHTLRRHREILRDYGSEYRRARDNVDQVLQRELLLSSSNENRNNPILNNRARGYDMYLKENDHINACDRLLDEQLEMAMSTKENMARQGINLRGISTRLHHISKKYPAINNLMQKIKTKKQKNTLILAAVISSCLIFTIFWIIN.

Residues 1 to 212 are Cytoplasmic-facing; that stretch reads MSETWEALRK…MQKIKTKKQK (212 aa). Positions 54–121 form a coiled coil; that stretch reads VTTEIEGLIE…RDNVDQVLQR (68 aa). A helical; Anchor for type IV membrane protein transmembrane segment spans residues 213-233; that stretch reads NTLILAAVISSCLIFTIFWII. Residue N234 is a topological domain, vesicular.

It belongs to the GOSR1 family. Component of several multiprotein Golgi SNARE complexes.

Its subcellular location is the golgi apparatus membrane. In terms of biological role, involved in transport from the ER to the Golgi apparatus as well as in intra-Golgi transport. It belongs to a super-family of proteins called t-SNAREs or soluble NSF (N-ethylmaleimide-sensitive factor) attachment protein receptor. Cooperates with ykt-6 for proper expression of Golgi-resident proteins. Required along with ykt-6 for normal embryonic development, seam cell division or differentiation, and ray formation. This chain is Golgi SNAP receptor complex member 1 (gos-28), found in Caenorhabditis elegans.